Consider the following 125-residue polypeptide: Ribosome-binding factor A (125 aa).

Belongs to the RbfA family. As to quaternary structure, monomer. Binds 30S ribosomal subunits, but not 50S ribosomal subunits or 70S ribosomes.

It localises to the cytoplasm. Its function is as follows. One of several proteins that assist in the late maturation steps of the functional core of the 30S ribosomal subunit. Associates with free 30S ribosomal subunits (but not with 30S subunits that are part of 70S ribosomes or polysomes). Required for efficient processing of 16S rRNA. May interact with the 5'-terminal helix region of 16S rRNA. The protein is Ribosome-binding factor A of Thermosipho melanesiensis (strain DSM 12029 / CIP 104789 / BI429).